The sequence spans 434 residues: Tryptamine hydroxycinnamoyltransferase 2 (434 aa).

Active-site proton acceptor residues include His-154 and Asp-380.

It belongs to the plant acyltransferase family.

Functionally, hydroxycinnamoyl transferase that catalyzes the transfer of an acyl from p-coumaryol-CoA to tryptamine, to produce coumaroyl tryptamine. Serotonin and tyramine serve as acyl acceptors in vitro. Can use caffeoyl-CoA, and to a lesser extent feruloyl-CoA, as acyl donors. The protein is Tryptamine hydroxycinnamoyltransferase 2 of Oryza sativa subsp. japonica (Rice).